Here is a 208-residue protein sequence, read N- to C-terminus: Small ribosomal subunit protein uS3 (208 aa).

Residues 17–86 (IDEYLEKELR…NPQIEVEEIK (70 aa)) form the KH type-2 domain.

It belongs to the universal ribosomal protein uS3 family. In terms of assembly, part of the 30S ribosomal subunit.

In terms of biological role, binds the lower part of the 30S subunit head. The protein is Small ribosomal subunit protein uS3 of Thermococcus onnurineus (strain NA1).